The primary structure comprises 310 residues: tRNA-cytidine(32) 2-sulfurtransferase (310 aa).

A PP-loop motif motif is present at residues S48 to S53. [4Fe-4S] cluster contacts are provided by C123, C126, and C214.

It belongs to the TtcA family. As to quaternary structure, homodimer. Mg(2+) serves as cofactor. Requires [4Fe-4S] cluster as cofactor.

Its subcellular location is the cytoplasm. The enzyme catalyses cytidine(32) in tRNA + S-sulfanyl-L-cysteinyl-[cysteine desulfurase] + AH2 + ATP = 2-thiocytidine(32) in tRNA + L-cysteinyl-[cysteine desulfurase] + A + AMP + diphosphate + H(+). The protein operates within tRNA modification. Catalyzes the ATP-dependent 2-thiolation of cytidine in position 32 of tRNA, to form 2-thiocytidine (s(2)C32). The sulfur atoms are provided by the cysteine/cysteine desulfurase (IscS) system. The sequence is that of tRNA-cytidine(32) 2-sulfurtransferase from Vibrio vulnificus (strain YJ016).